The following is a 31-amino-acid chain: Photosystem I reaction center subunit XII (31 aa).

A helical transmembrane segment spans residues 7 to 26 (QVYIALLTALIPAFFALKLG).

Belongs to the PsaM family.

The protein localises to the plastid. Its subcellular location is the chloroplast thylakoid membrane. The polypeptide is Photosystem I reaction center subunit XII (Euglena viridis (Cercaria viridis)).